A 201-amino-acid chain; its full sequence is Protease (201 aa).

Residues His-55, Asp-72, and Cys-122 contribute to the active site.

It belongs to the peptidase C5 family. As to quaternary structure, interacts with protease cofactor pVI-C; this interaction is necessary for protease activation.

The protein resides in the virion. The protein localises to the host nucleus. The enzyme catalyses Cleaves proteins of the adenovirus and its host cell at two consensus sites: -Yaa-Xaa-Gly-Gly-|-Xaa- and -Yaa-Xaa-Gly-Xaa-|-Gly- (in which Yaa is Met, Ile or Leu, and Xaa is any amino acid).. Its activity is regulated as follows. Requires DNA and protease cofactor for maximal activation. Inside nascent virions, becomes partially activated by binding to the viral DNA, allowing it to cleave the cofactor that binds to the protease and fully activates it. Actin, like the viral protease cofactor, seems to act as a cofactor in the cleavage of cytokeratin 18 and of actin itself. Functionally, cleaves viral precursor proteins (pTP, pIIIa, pVI, pVII, pVIII, and pX) inside newly assembled particles giving rise to mature virions. Protease complexed to its cofactor slides along the viral DNA to specifically locate and cleave the viral precursors. Mature virions have a weakened organization compared to the unmature virions, thereby facilitating subsequent uncoating. Without maturation, the particle lacks infectivity and is unable to uncoat. Late in adenovirus infection, in the cytoplasm, may participate in the cytoskeleton destruction. Cleaves host cell cytoskeletal keratins K7 and K18. The protein is Protease of Bovine adenovirus 4 (BAdV-4).